A 540-amino-acid polypeptide reads, in one-letter code: Hexose transporter HXT14 (540 aa).

At 1 to 56 the chain is on the cytoplasmic side; that stretch reads MTAQIPYQHSSGYISHFHNNELDAGRGRDYNVTIKYLDDKEENIEGQAAKISHNAS. Residues 57 to 76 form a helical membrane-spanning segment; that stretch reads LHIPVLLCLVISLGGFIFGW. Topologically, residues 77–119 are extracellular; the sequence is DIGTIGGMTNMVSFQEKFGTTNIIHDDETIFVSTKKLTDLQIG. The helical transmembrane segment at 120–140 threads the bilayer; the sequence is LIISIFNISCGVGALTLSKIG. The Cytoplasmic segment spans residues 141 to 146; sequence DWIGRK. A helical membrane pass occupies residues 147 to 167; that stretch reads GGIWFALVVYCIGITIQILSY. Topologically, residues 168–177 are extracellular; sequence GRWYFLTLGR. Residues 178-198 form a helical membrane-spanning segment; it reads AVTGIGVGVTTVLVPMFLSEN. Topologically, residues 199 to 204 are cytoplasmic; the sequence is SPLKIR. The chain crosses the membrane as a helical span at residues 205 to 225; it reads GSMVSTYQLIVTFGILMGNIL. Residues 226 to 243 lie on the Extracellular side of the membrane; the sequence is NFICERCYKDPTQNIAWQ. The helical transmembrane segment at 244 to 264 threads the bilayer; it reads LPLFLGYIWAIIIGMSLVYVP. The Cytoplasmic segment spans residues 265–357; it reads ESPQYLAKIK…IMAFQQLSGI (93 aa). Residues 358–374 form a helical membrane-spanning segment; sequence NYFFYYGTSVFKGVGIK. At 375–380 the chain is on the extracellular side; the sequence is DPYITS. Residues 381–398 form a helical membrane-spanning segment; it reads IILSSVNFLSTILGIYYV. The Cytoplasmic portion of the chain corresponds to 399-405; sequence EKWGHKT. The helical transmembrane segment at 406–426 threads the bilayer; that stretch reads CLLYGSTNLLFYMMTYATVGT. Residues 427–440 are Extracellular-facing; it reads FGRETDFSNIVLII. A helical transmembrane segment spans residues 441 to 461; it reads VTCCFIFWFAITLGPVTFVLV. At 462–478 the chain is on the cytoplasmic side; the sequence is SELFPLRTRAISMAICT. Residues 479–499 form a helical membrane-spanning segment; the sequence is FINWMFNFLISLLTPMIVSKI. Asp-500 is a topological domain (extracellular). Residues 501-521 traverse the membrane as a helical segment; the sequence is FKLGYIFAACLLALIIFSWIL. At 522–540 the chain is on the cytoplasmic side; it reads VPETRKKNEQEINKIFEPE.

It belongs to the major facilitator superfamily. Sugar transporter (TC 2.A.1.1) family.

The protein localises to the membrane. Probable glucose transporter. The protein is Hexose transporter HXT14 (HXT14) of Saccharomyces cerevisiae (strain ATCC 204508 / S288c) (Baker's yeast).